The sequence spans 179 residues: Translationally-controlled tumor protein homolog (179 aa).

The 179-residue stretch at 1 to 179 (MIIYKDIISG…WKHGLEEMKV (179 aa)) folds into the TCTP domain.

It belongs to the TCTP family.

The protein localises to the cytoplasm. The protein resides in the cytoskeleton. Involved in protein synthesis. Involved in microtubule stabilization. Involved in osmoadaptation. The chain is Translationally-controlled tumor protein homolog from Emericella nidulans (strain FGSC A4 / ATCC 38163 / CBS 112.46 / NRRL 194 / M139) (Aspergillus nidulans).